Consider the following 345-residue polypeptide: Holliday junction branch migration complex subunit RuvB (345 aa).

Residues 4–182 (PDRIVSAVQR…FGIPIRLEFY (179 aa)) form a large ATPase domain (RuvB-L) region. Residues Arg22, Gly63, Lys66, Thr67, Thr68, 129 to 131 (EDY), Arg172, Tyr182, and Arg219 each bind ATP. Position 67 (Thr67) interacts with Mg(2+). The tract at residues 183 to 253 (TVDELQAIVT…IADAALSRLE (71 aa)) is small ATPAse domain (RuvB-S). Residues 256 to 345 (ALGLDQLDRR…QSQINLFEEE (90 aa)) are head domain (RuvB-H). Positions 292, 311, and 316 each coordinate DNA.

Belongs to the RuvB family. As to quaternary structure, homohexamer. Forms an RuvA(8)-RuvB(12)-Holliday junction (HJ) complex. HJ DNA is sandwiched between 2 RuvA tetramers; dsDNA enters through RuvA and exits via RuvB. An RuvB hexamer assembles on each DNA strand where it exits the tetramer. Each RuvB hexamer is contacted by two RuvA subunits (via domain III) on 2 adjacent RuvB subunits; this complex drives branch migration. In the full resolvosome a probable DNA-RuvA(4)-RuvB(12)-RuvC(2) complex forms which resolves the HJ.

It localises to the cytoplasm. It catalyses the reaction ATP + H2O = ADP + phosphate + H(+). Its function is as follows. The RuvA-RuvB-RuvC complex processes Holliday junction (HJ) DNA during genetic recombination and DNA repair, while the RuvA-RuvB complex plays an important role in the rescue of blocked DNA replication forks via replication fork reversal (RFR). RuvA specifically binds to HJ cruciform DNA, conferring on it an open structure. The RuvB hexamer acts as an ATP-dependent pump, pulling dsDNA into and through the RuvAB complex. RuvB forms 2 homohexamers on either side of HJ DNA bound by 1 or 2 RuvA tetramers; 4 subunits per hexamer contact DNA at a time. Coordinated motions by a converter formed by DNA-disengaged RuvB subunits stimulates ATP hydrolysis and nucleotide exchange. Immobilization of the converter enables RuvB to convert the ATP-contained energy into a lever motion, pulling 2 nucleotides of DNA out of the RuvA tetramer per ATP hydrolyzed, thus driving DNA branch migration. The RuvB motors rotate together with the DNA substrate, which together with the progressing nucleotide cycle form the mechanistic basis for DNA recombination by continuous HJ branch migration. Branch migration allows RuvC to scan DNA until it finds its consensus sequence, where it cleaves and resolves cruciform DNA. The polypeptide is Holliday junction branch migration complex subunit RuvB (Chelativorans sp. (strain BNC1)).